Consider the following 90-residue polypeptide: Molybdopterin synthase sulfur carrier subunit (90 aa).

Position 90 is a 1-thioglycine; alternate (glycine 90). Glycine 90 carries the glycyl adenylate; alternate modification.

Belongs to the MoaD family. MOCS2A subfamily. Heterotetramer; composed of 2 small (Mocs2A) and 2 large (Mocs2B) subunits. Post-translationally, C-terminal thiocarboxylation occurs in 2 steps, it is first acyl-adenylated (-COAMP) via the hesA/moeB/thiF part of MOCS3, then thiocarboxylated (-COSH) via the rhodanese domain of MOCS3.

It is found in the cytoplasm. The protein operates within cofactor biosynthesis; molybdopterin biosynthesis. In terms of biological role, acts as a sulfur carrier required for molybdopterin biosynthesis. Component of the molybdopterin synthase complex that catalyzes the conversion of precursor Z into molybdopterin by mediating the incorporation of 2 sulfur atoms into precursor Z to generate a dithiolene group. In the complex, serves as sulfur donor by being thiocarboxylated (-COSH) at its C-terminus by MOCS3. After interaction with Mocs2B, the sulfur is then transferred to precursor Z to form molybdopterin. This Drosophila ananassae (Fruit fly) protein is Molybdopterin synthase sulfur carrier subunit.